A 109-amino-acid chain; its full sequence is Large ribosomal subunit protein uL24 (109 aa).

The protein belongs to the universal ribosomal protein uL24 family. Part of the 50S ribosomal subunit.

One of two assembly initiator proteins, it binds directly to the 5'-end of the 23S rRNA, where it nucleates assembly of the 50S subunit. Functionally, one of the proteins that surrounds the polypeptide exit tunnel on the outside of the subunit. The sequence is that of Large ribosomal subunit protein uL24 from Syntrophobacter fumaroxidans (strain DSM 10017 / MPOB).